A 458-amino-acid chain; its full sequence is Cysteine--tRNA ligase (458 aa).

C29 is a binding site for Zn(2+). The 'HIGH' region signature appears at 31–41; it reads PTVYDNPHIGN. Positions 214, 239, and 243 each coordinate Zn(2+). Positions 272–276 match the 'KMSKS' region motif; the sequence is KMSKS. K275 is a binding site for ATP.

The protein belongs to the class-I aminoacyl-tRNA synthetase family. In terms of assembly, monomer. Requires Zn(2+) as cofactor.

The protein resides in the cytoplasm. It carries out the reaction tRNA(Cys) + L-cysteine + ATP = L-cysteinyl-tRNA(Cys) + AMP + diphosphate. The protein is Cysteine--tRNA ligase of Rickettsia bellii (strain OSU 85-389).